The sequence spans 181 residues: Immunity-related GTPase family M protein (181 aa).

Residues 32–181 form the IRG-type G domain; that stretch reads TPVNITMAGD…NLQKERVCEY (150 aa). Residues 41 to 48, 66 to 70, and 147 to 149 each bind GTP; these read DSGNGMST, TELVK, and KLD.

The protein belongs to the TRAFAC class dynamin-like GTPase superfamily. IRG family. In terms of assembly, interacts with ULK1; promoting the coassembly of ULK1 and BECN1. Interacts with BECN1; enhancing BECN1-interacting partners and influencing the composition of the BECN1 complex. Interacts with ATG16L1. Interacts with NOD2; promoting IRGM 'Lys-63'-linked polyubiquitination, which is required for interactions with the core autophagy factors. Interacts with STX17; promoting STX17 recruitment to autophagosomes. Interacts with ATG8 proteins (GABARAP, GABARAPL1, GABARAPL2, MAP1LC3A, MAP1LC3B and MAP1LC3C); promoting STX17 recruitment to autophagosomes. Interacts with TFEB; promoting association between TFEB and PPP3CB and TFEB dephosphorylation. Interacts with PPP3CB; promoting association between TFEB and PPP3CB and TFEB dephosphorylation. Interacts with NLRP3; preventing NLRP3 inflammasome assembly and promoting SQSTM1/p62-dependent autophagic degradation of NLRP3. Interacts with CGAS; promoting SQSTM1/p62-dependent autophagic degradation of CGAS. Interacts with RIGI/RIG-I; promoting SQSTM1/p62-dependent autophagic degradation of RIGI/RIG-I. Interacts with NOD1; promoting SQSTM1/p62-dependent autophagic degradation of RIGI/RIG-I. Interacts with NOD2; promoting SQSTM1/p62-dependent autophagic degradation of RIGI/RIG-I. Interacts with RIPK2; promoting SQSTM1/p62-dependent autophagic degradation of RIGI/RIG-I. Post-translationally, ubiquitinated via 'Lys-63'-linked polyubiquitination in a NOD2-dependent process. 'Lys-63'-linked polyubiquitination is required for interactions with the core autophagy factors. In terms of tissue distribution, widely expressed (at protein level). Expressed in several tissues including colon, small bowel and peripheral blood leukocytes.

Its subcellular location is the golgi apparatus membrane. The protein localises to the cell membrane. It localises to the cytoplasmic vesicle. It is found in the phagosome membrane. The protein resides in the autophagosome membrane. Its subcellular location is the lysosome membrane. The protein localises to the late endosome membrane. It localises to the mitochondrion membrane. It is found in the cell projection. The protein resides in the phagocytic cup. Its subcellular location is the mitochondrion. The enzyme catalyses GTP + H2O = GDP + phosphate + H(+). Its function is as follows. Immunity-related GTPase that plays important roles in innate immunity and inflammatory response. Acts as a dynamin-like protein that binds to intracellular membranes and promotes remodeling and trafficking of those membranes. Required for clearance of acute protozoan and bacterial infections by interacting with autophagy and lysosome regulatory proteins, thereby promoting the fusion of phagosomes with lysosomes for efficient degradation of cargo including microbes. Regulates selective autophagy, including xenophagy and mitophagy, both directly and indirectly. Directly regulates autophagy by acting as a molecular adapter that promotes the coassembly of the core autophagy machinery to mediate antimicrobial defense: IRGM (1) activates AMPK, which in turn phosphorylates ULK1 and BECN1 to induce autophagy, (2) promotes the coassembly of ULK1 and BECN1, enhancing BECN1-interacting partners and (3) influences the composition of the BECN1 complex, by competing with the negative regulators BCL2 and RUBCN, to trigger autophagy. Also activates autophagy by promoting recruitment of STX17 to autophagosomes. In collaboration with ATG8 proteins, regulate lysosomal biogenesis, a fundamental process for any autophagic pathway, by promoting TFEB dephosphorylation. Also modulates autophagy by assisting with autophagosome formation and preventing lysosomal deacidification. While activating autophagy, acts as a key negative regulator of the inflammatory and interferon responses both by (1) promoting mitophagy and (2) mediating autophagy-dependent degradation of effectors of the inflammatory response. Promotes degradation of damaged and IFNG/IFN-gamma-stressed mitochondria via mitophagy, preventing cytosolic release of ligands that activate inflammation. Acts as a suppressor of inflammation by promoting recruitment of inflammation effectors, such as CGAS, RIGI/RIG-I and NLRP3, to autophagosome membranes, leading to their SQSTM1/p62-dependent autophagic degradation. Also directly inhibits assembly of the NLRP3 inflammasome by preventing the association between NLRP3 and PYCARD. Acts as a negative regulator of antiviral innate immune response by suppressing the RIPK2-dependent pro-inflammatory response: mediates recruitment of RIPosomes, composed of RIPK2 and NOD1 or NOD2, to autophagosome membranes, promoting their SQSTM1/p62-dependent autophagic degradation. Functionally, acts as a positive regulator of mitophagy in response to intracellular mycobacteria infection: specifically binds cardiolipin, leading to its translocation to mitochondria, where it promotes affected mitochondrial fission and mitophagy. In terms of biological role, (Microbial infection) Following infection by hepatitis C virus (HCV), promotes HCV-triggered membrane remodeling, leading to autophagy and Golgi fragmentation, a step required for HCV replication. The polypeptide is Immunity-related GTPase family M protein (Homo sapiens (Human)).